We begin with the raw amino-acid sequence, 465 residues long: Probable multidrug resistance protein NorM (465 aa).

The next 11 membrane-spanning stretches (helical) occupy residues 61-83 (VLAG…AVVP), 104-126 (GMWV…ERIL), 141-163 (HYLA…RGLV), 170-192 (GIIL…VLVF), 202-224 (MNGA…VAYV), 251-273 (LRLG…AASI), 283-305 (LAAH…GLSQ), 326-348 (ASIM…FAAV), 368-390 (LAYA…IQAV), 403-425 (IPAM…TMAF), and 435-457 (WFGF…VLLV).

The protein belongs to the multi antimicrobial extrusion (MATE) (TC 2.A.66.1) family.

It localises to the cell inner membrane. In terms of biological role, multidrug efflux pump. The sequence is that of Probable multidrug resistance protein NorM (norM) from Agrobacterium fabrum (strain C58 / ATCC 33970) (Agrobacterium tumefaciens (strain C58)).